A 127-amino-acid chain; its full sequence is Ribonuclease P protein component (127 aa).

This sequence belongs to the RnpA family. Consists of a catalytic RNA component (M1 or rnpB) and a protein subunit.

The catalysed reaction is Endonucleolytic cleavage of RNA, removing 5'-extranucleotides from tRNA precursor.. Functionally, RNaseP catalyzes the removal of the 5'-leader sequence from pre-tRNA to produce the mature 5'-terminus. It can also cleave other RNA substrates such as 4.5S RNA. The protein component plays an auxiliary but essential role in vivo by binding to the 5'-leader sequence and broadening the substrate specificity of the ribozyme. This Rippkaea orientalis (strain PCC 8801 / RF-1) (Cyanothece sp. (strain PCC 8801)) protein is Ribonuclease P protein component.